We begin with the raw amino-acid sequence, 236 residues long: MKYKLLPCLLAILLTGCDRTEVTLSFTPEMASFSNEFDFDPLRGPVKDFTQTLMDEQGEVTKRVSGTLSEEGCFDSLELLDLENNTVVALVLDANYYRDAETLEKRVRLQGKCQLAELPSAGVSWETDDNGFVIKASSKQMQMEYRYDDQGYPLGKTTKSNDKTLSVSATPSTDPIKKLDYTAVTLLNNQRVGNVKQSCEYDSHANPVGCQLIIVDEGVKPAVERVYTIKNTIDYY.

An N-terminal signal peptide occupies residues 1–16; the sequence is MKYKLLPCLLAILLTG. A lipid anchor (N-palmitoyl cysteine) is attached at Cys17. Cys17 is lipidated: S-diacylglycerol cysteine.

The protein belongs to the UPF0257 family.

The protein localises to the cell membrane. This is UPF0257 lipoprotein YnfC from Escherichia coli O157:H7.